The following is a 142-amino-acid chain: Transcriptional regulator MraZ (142 aa).

2 consecutive SpoVT-AbrB domains span residues 5–51 (SSAL…PRPE) and 77–120 (AQDV…DAAS).

It belongs to the MraZ family. In terms of assembly, forms oligomers.

It is found in the cytoplasm. The protein resides in the nucleoid. This chain is Transcriptional regulator MraZ, found in Bordetella bronchiseptica (strain ATCC BAA-588 / NCTC 13252 / RB50) (Alcaligenes bronchisepticus).